Consider the following 261-residue polypeptide: Cytochrome c oxidase subunit 3 (261 aa).

Topologically, residues 1–15 are mitochondrial matrix; it reads MTHQTHAYHMVNPSP. The chain crosses the membrane as a helical span at residues 16–34; sequence WPLTGALSALLMTSGLIMW. The Mitochondrial intermembrane segment spans residues 35–40; that stretch reads FHFNST. Residues 41 to 66 form a helical membrane-spanning segment; it reads ALLTLGLTTNMLTMYQWWRDVIREST. Topologically, residues 67-72 are mitochondrial matrix; that stretch reads FQGHHT. A helical membrane pass occupies residues 73–105; that stretch reads PAVQKGLRYGMILFIISEVLFFTGFFWAFYHSS. The Mitochondrial intermembrane portion of the chain corresponds to 106–128; that stretch reads LAPTPELGGCWPPTGIHPLNPLE. A helical membrane pass occupies residues 129-152; sequence VPLLNTSVLLASGVSITWAHHSLM. Over 153–155 the chain is Mitochondrial matrix; it reads EGN. Residues 156-183 traverse the membrane as a helical segment; it reads RYHMLQALFITIALGVYFTLLQASEYYE. The Mitochondrial intermembrane segment spans residues 184 to 190; that stretch reads APFTISD. A helical transmembrane segment spans residues 191–223; the sequence is GVYGSTFFVATGFHGLHVIIGSTFLIVCFFRQL. The Mitochondrial matrix segment spans residues 224–232; the sequence is KFHFTSSHH. A helical transmembrane segment spans residues 233–256; it reads FGFEAAAWYWHFVDVVWLFLYMSI. Residues 257-261 lie on the Mitochondrial intermembrane side of the membrane; that stretch reads YWWGS.

It belongs to the cytochrome c oxidase subunit 3 family. As to quaternary structure, component of the cytochrome c oxidase (complex IV, CIV), a multisubunit enzyme composed of 14 subunits. The complex is composed of a catalytic core of 3 subunits MT-CO1, MT-CO2 and MT-CO3, encoded in the mitochondrial DNA, and 11 supernumerary subunits COX4I, COX5A, COX5B, COX6A, COX6B, COX6C, COX7A, COX7B, COX7C, COX8 and NDUFA4, which are encoded in the nuclear genome. The complex exists as a monomer or a dimer and forms supercomplexes (SCs) in the inner mitochondrial membrane with NADH-ubiquinone oxidoreductase (complex I, CI) and ubiquinol-cytochrome c oxidoreductase (cytochrome b-c1 complex, complex III, CIII), resulting in different assemblies (supercomplex SCI(1)III(2)IV(1) and megacomplex MCI(2)III(2)IV(2)).

It localises to the mitochondrion inner membrane. It carries out the reaction 4 Fe(II)-[cytochrome c] + O2 + 8 H(+)(in) = 4 Fe(III)-[cytochrome c] + 2 H2O + 4 H(+)(out). Its function is as follows. Component of the cytochrome c oxidase, the last enzyme in the mitochondrial electron transport chain which drives oxidative phosphorylation. The respiratory chain contains 3 multisubunit complexes succinate dehydrogenase (complex II, CII), ubiquinol-cytochrome c oxidoreductase (cytochrome b-c1 complex, complex III, CIII) and cytochrome c oxidase (complex IV, CIV), that cooperate to transfer electrons derived from NADH and succinate to molecular oxygen, creating an electrochemical gradient over the inner membrane that drives transmembrane transport and the ATP synthase. Cytochrome c oxidase is the component of the respiratory chain that catalyzes the reduction of oxygen to water. Electrons originating from reduced cytochrome c in the intermembrane space (IMS) are transferred via the dinuclear copper A center (CU(A)) of subunit 2 and heme A of subunit 1 to the active site in subunit 1, a binuclear center (BNC) formed by heme A3 and copper B (CU(B)). The BNC reduces molecular oxygen to 2 water molecules using 4 electrons from cytochrome c in the IMS and 4 protons from the mitochondrial matrix. The protein is Cytochrome c oxidase subunit 3 (MT-CO3) of Ovis aries (Sheep).